The sequence spans 449 residues: Polyadenylation factor subunit 2 (449 aa).

WD repeat units lie at residues 77–116, 119–158, 161–200, 203–242, 245–285, 288–328, and 337–376; these read KVKH…FESI, AHDS…VKVL, AHTE…QERV, GHHW…NVST, GLKH…RELQ, RDDM…SNST, and AHEK…DPNA. Residues 411–432 are disordered; that stretch reads LPPANETNLGTPQPSILGSESI. Residues 415 to 432 show a composition bias toward polar residues; that stretch reads NETNLGTPQPSILGSESI.

The protein localises to the nucleus. In terms of biological role, required for 3'-end cleavage and polyadenylation of pre-mRNAs. Also involved in chromosome segregation where it has a role in chromosome attachment to the mitotic spindle. The protein is Polyadenylation factor subunit 2 (PSF2) of Eremothecium gossypii (strain ATCC 10895 / CBS 109.51 / FGSC 9923 / NRRL Y-1056) (Yeast).